Consider the following 414-residue polypeptide: 3-aminobutyryl-CoA aminotransferase (414 aa).

Lys261 is subject to N6-(pyridoxal phosphate)lysine.

It belongs to the class-III pyridoxal-phosphate-dependent aminotransferase family. In terms of assembly, homodimer. Requires pyridoxal 5'-phosphate as cofactor.

It catalyses the reaction (3S)-3-aminobutanoyl-CoA + 2-oxoglutarate = acetoacetyl-CoA + L-glutamate. Its pathway is amino-acid degradation; L-lysine degradation via acetate pathway. Functionally, 3-aminobutyryl-CoA aminotransferase that acts specifically on coenzyme A (CoA) esters and catalyzes the conversion of 3-aminobutyryl-CoA into acetoacetyl-CoA in an alternative pathway of lysine fermentation. This is 3-aminobutyryl-CoA aminotransferase (kat) from Cloacimonas acidaminovorans (strain Evry).